The chain runs to 441 residues: ATP-dependent protease ATPase subunit HslU (441 aa).

ATP-binding positions include Val-18, 60–65 (GVGKTE), Asp-254, Glu-319, and Arg-391.

The protein belongs to the ClpX chaperone family. HslU subfamily. A double ring-shaped homohexamer of HslV is capped on each side by a ring-shaped HslU homohexamer. The assembly of the HslU/HslV complex is dependent on binding of ATP.

The protein resides in the cytoplasm. Functionally, ATPase subunit of a proteasome-like degradation complex; this subunit has chaperone activity. The binding of ATP and its subsequent hydrolysis by HslU are essential for unfolding of protein substrates subsequently hydrolyzed by HslV. HslU recognizes the N-terminal part of its protein substrates and unfolds these before they are guided to HslV for hydrolysis. The protein is ATP-dependent protease ATPase subunit HslU of Verminephrobacter eiseniae (strain EF01-2).